A 941-amino-acid chain; its full sequence is Cilia- and flagella-associated protein 69 (941 aa).

Low complexity predominate over residues 1–14 (MWTEEAGATAEAQE). The segment at 1 to 26 (MWTEEAGATAEAQESGIRNKSSSSSQ) is disordered. Polar residues predominate over residues 16–26 (GIRNKSSSSSQ).

Highly expressed in the testis, specifically in sperm (at protein level). Expressed in the brain, kidney, liver, lung, and intestine.

It localises to the cell projection. It is found in the cilium. Its subcellular location is the flagellum. Its function is as follows. Cilium- and flagellum-associated protein. In the olfactory epithelium, regulates the speed of activation and termination of the odor response and thus contributes to the robustness of olfactory transduction pathways. Required for sperm flagellum assembly and stability. The sequence is that of Cilia- and flagella-associated protein 69 from Homo sapiens (Human).